A 459-amino-acid polypeptide reads, in one-letter code: Elongation factor 1-alpha 4 (459 aa).

The region spanning 5-242 (KTHINIVVIG…DCIIPPQRPT (238 aa)) is the tr-type G domain. The tract at residues 14–21 (GHVDSGKS) is G1. The G2 stretch occupies residues 70–74 (GITID). Residues 91 to 94 (DAPG) are G3. A G4 region spans residues 153–156 (NKMD). The segment at 194 to 196 (SGF) is G5. 5-glutamyl glycerylphosphorylethanolamine occurs at positions 301 and 374.

Belongs to the TRAFAC class translation factor GTPase superfamily. Classic translation factor GTPase family. EF-Tu/EF-1A subfamily.

The protein resides in the cytoplasm. In terms of biological role, this protein promotes the GTP-dependent binding of aminoacyl-tRNA to the A-site of ribosomes during protein biosynthesis. This Oscheius tipulae protein is Elongation factor 1-alpha 4 (eft-4).